A 425-amino-acid polypeptide reads, in one-letter code: Protein CLP1 homolog (425 aa).

ATP-binding positions include E18, K59, and 121 to 126 (DVGKST).

This sequence belongs to the Clp1 family. Clp1 subfamily.

It localises to the nucleus. In terms of biological role, required for endonucleolytic cleavage during polyadenylation-dependent pre-mRNA 3'-end formation. This is Protein CLP1 homolog (cbc) from Drosophila mojavensis (Fruit fly).